A 482-amino-acid polypeptide reads, in one-letter code: Glucose starvation modulator protein 1 (482 aa).

Residues 20-48 constitute a DNA-binding region (zn(2)-C6 fungal-type); sequence CVFCHEKHLQCDVGRPCQNCEKRNIGESC. One can recognise a PAS domain in the interval 350–422; sequence LLEYENMSKM…KLFNEYLAFS (73 aa).

Belongs to the ERT1/acuK family.

The protein localises to the nucleus. Functionally, transcription factor which regulates nonfermentable carbon utilization. This Eremothecium gossypii (strain ATCC 10895 / CBS 109.51 / FGSC 9923 / NRRL Y-1056) (Yeast) protein is Glucose starvation modulator protein 1 (GSM1).